The primary structure comprises 395 residues: MRALRLVTSESVTEGHPDKLADRISDAILDALIAQDKKARVAAETLVTTGLVFVAGEITTEGYVDIPNLVRKTVREVGYTRAKYGFDADTCAVLTAIDEQSPDIAGGVNLSYEWRVLKSTDPLDRVGAGDQGLMFGYATDETPELMPLPITLAHRLTMRLAEVRKTGLLPYLRPDGKAQVTVVYEGDKPLYVKTVVVSAQHSPEVEQEQLREDLIREVVRQAIPPEYLKDGETEYLINPSGRFILGGPHADTGLTGRKIIVDTYGGAVPHGGGAFSGKDPTKVDRSASYYARYMAKNIVAAGLARRALVELAYAIGKARPVSLRVETFGTGVLPDEKLTEIAKKVFDPRPLAIIEELDLLRPIYTPTSAYGHFGRPGFPWEETDRVEALRREAGL.

Histidine 16 is a binding site for ATP. Aspartate 18 lines the Mg(2+) pocket. Glutamate 44 contacts K(+). Glutamate 57 and glutamine 100 together coordinate L-methionine. Residues 100-110 (QSPDIAGGVNL) form a flexible loop region. Residues 175-177 (DGK), 242-243 (RF), aspartate 251, 257-258 (RK), alanine 274, and lysine 278 each bind ATP. Residue aspartate 251 participates in L-methionine binding. L-methionine is bound at residue lysine 282.

Belongs to the AdoMet synthase family. Homotetramer; dimer of dimers. Mg(2+) is required as a cofactor. The cofactor is K(+).

Its subcellular location is the cytoplasm. The catalysed reaction is L-methionine + ATP + H2O = S-adenosyl-L-methionine + phosphate + diphosphate. It functions in the pathway amino-acid biosynthesis; S-adenosyl-L-methionine biosynthesis; S-adenosyl-L-methionine from L-methionine: step 1/1. Catalyzes the formation of S-adenosylmethionine (AdoMet) from methionine and ATP. The overall synthetic reaction is composed of two sequential steps, AdoMet formation and the subsequent tripolyphosphate hydrolysis which occurs prior to release of AdoMet from the enzyme. The chain is S-adenosylmethionine synthase from Thermus thermophilus (strain ATCC BAA-163 / DSM 7039 / HB27).